Consider the following 447-residue polypeptide: Gamma-glutamyl phosphate reductase (447 aa).

It belongs to the gamma-glutamyl phosphate reductase family.

Its subcellular location is the cytoplasm. The enzyme catalyses L-glutamate 5-semialdehyde + phosphate + NADP(+) = L-glutamyl 5-phosphate + NADPH + H(+). It participates in amino-acid biosynthesis; L-proline biosynthesis; L-glutamate 5-semialdehyde from L-glutamate: step 2/2. Its function is as follows. Catalyzes the NADPH-dependent reduction of L-glutamate 5-phosphate into L-glutamate 5-semialdehyde and phosphate. The product spontaneously undergoes cyclization to form 1-pyrroline-5-carboxylate. The polypeptide is Gamma-glutamyl phosphate reductase (Methanosarcina barkeri (strain Fusaro / DSM 804)).